The primary structure comprises 380 residues: Queuine tRNA-ribosyltransferase (380 aa).

Aspartate 96 (proton acceptor) is an active-site residue. Residues 96–100 (DSGGF), aspartate 150, glutamine 193, and glycine 220 contribute to the substrate site. The segment at 251–257 (GVGAPDS) is RNA binding. Aspartate 270 (nucleophile) is an active-site residue. Positions 275–279 (TRIAR) are RNA binding; important for wobble base 34 recognition. Zn(2+) contacts are provided by cysteine 308, cysteine 310, cysteine 313, and histidine 339.

The protein belongs to the queuine tRNA-ribosyltransferase family. Homodimer. Within each dimer, one monomer is responsible for RNA recognition and catalysis, while the other monomer binds to the replacement base PreQ1. Requires Zn(2+) as cofactor.

The enzyme catalyses 7-aminomethyl-7-carbaguanine + guanosine(34) in tRNA = 7-aminomethyl-7-carbaguanosine(34) in tRNA + guanine. Its pathway is tRNA modification; tRNA-queuosine biosynthesis. Catalyzes the base-exchange of a guanine (G) residue with the queuine precursor 7-aminomethyl-7-deazaguanine (PreQ1) at position 34 (anticodon wobble position) in tRNAs with GU(N) anticodons (tRNA-Asp, -Asn, -His and -Tyr). Catalysis occurs through a double-displacement mechanism. The nucleophile active site attacks the C1' of nucleotide 34 to detach the guanine base from the RNA, forming a covalent enzyme-RNA intermediate. The proton acceptor active site deprotonates the incoming PreQ1, allowing a nucleophilic attack on the C1' of the ribose to form the product. After dissociation, two additional enzymatic reactions on the tRNA convert PreQ1 to queuine (Q), resulting in the hypermodified nucleoside queuosine (7-(((4,5-cis-dihydroxy-2-cyclopenten-1-yl)amino)methyl)-7-deazaguanosine). In Streptococcus pneumoniae (strain P1031), this protein is Queuine tRNA-ribosyltransferase.